Reading from the N-terminus, the 597-residue chain is Elongation factor 4 (597 aa).

Residues 2–184 form the tr-type G domain; it reads QNIRNFSIIA…DIVKKIPAPE (183 aa). GTP-binding positions include 14 to 19 and 131 to 134; these read DHGKST and NKID.

The protein belongs to the TRAFAC class translation factor GTPase superfamily. Classic translation factor GTPase family. LepA subfamily.

It is found in the cell inner membrane. The catalysed reaction is GTP + H2O = GDP + phosphate + H(+). In terms of biological role, required for accurate and efficient protein synthesis under certain stress conditions. May act as a fidelity factor of the translation reaction, by catalyzing a one-codon backward translocation of tRNAs on improperly translocated ribosomes. Back-translocation proceeds from a post-translocation (POST) complex to a pre-translocation (PRE) complex, thus giving elongation factor G a second chance to translocate the tRNAs correctly. Binds to ribosomes in a GTP-dependent manner. The sequence is that of Elongation factor 4 from Haemophilus ducreyi (strain 35000HP / ATCC 700724).